The primary structure comprises 233 residues: Esterase FUS5 (233 aa).

Catalysis depends on charge relay system residues Ser-105, Asp-159, and His-187.

It belongs to the LovG family.

Its function is as follows. Esterase; part of the gene cluster that mediates the biosynthesis of the mycotoxin fusarin C. Within the cluster, FUS1, FUS2, FUS8 and FUS9 are sufficient for fusarin production. The other FUS cluster members are not essential for fusarin C biosynthesis. The protein is Esterase FUS5 of Gibberella fujikuroi (strain CBS 195.34 / IMI 58289 / NRRL A-6831) (Bakanae and foot rot disease fungus).